We begin with the raw amino-acid sequence, 202 residues long: Recombination protein RecR (202 aa).

A C4-type zinc finger spans residues 61 to 76; that stretch reads CARCNSFTEDEVCATC. In terms of domain architecture, Toprim spans 84–179; it reads GLLCIVETPA…KVTRLARGVP (96 aa).

It belongs to the RecR family.

Functionally, may play a role in DNA repair. It seems to be involved in an RecBC-independent recombinational process of DNA repair. It may act with RecF and RecO. This chain is Recombination protein RecR, found in Bordetella bronchiseptica (strain ATCC BAA-588 / NCTC 13252 / RB50) (Alcaligenes bronchisepticus).